We begin with the raw amino-acid sequence, 189 residues long: Elongation factor P (189 aa).

Belongs to the elongation factor P family.

It localises to the cytoplasm. Its pathway is protein biosynthesis; polypeptide chain elongation. Its function is as follows. Involved in peptide bond synthesis. Stimulates efficient translation and peptide-bond synthesis on native or reconstituted 70S ribosomes in vitro. Probably functions indirectly by altering the affinity of the ribosome for aminoacyl-tRNA, thus increasing their reactivity as acceptors for peptidyl transferase. The polypeptide is Elongation factor P (Pseudomonas syringae pv. tomato (strain ATCC BAA-871 / DC3000)).